The primary structure comprises 284 residues: Bifunctional protein FolD (284 aa).

Residues 165 to 167, Ser-190, and Ile-231 contribute to the NADP(+) site; that span reads GRS.

It belongs to the tetrahydrofolate dehydrogenase/cyclohydrolase family. In terms of assembly, homodimer.

It carries out the reaction (6R)-5,10-methylene-5,6,7,8-tetrahydrofolate + NADP(+) = (6R)-5,10-methenyltetrahydrofolate + NADPH. The catalysed reaction is (6R)-5,10-methenyltetrahydrofolate + H2O = (6R)-10-formyltetrahydrofolate + H(+). It participates in one-carbon metabolism; tetrahydrofolate interconversion. In terms of biological role, catalyzes the oxidation of 5,10-methylenetetrahydrofolate to 5,10-methenyltetrahydrofolate and then the hydrolysis of 5,10-methenyltetrahydrofolate to 10-formyltetrahydrofolate. This Streptococcus thermophilus (strain ATCC BAA-250 / LMG 18311) protein is Bifunctional protein FolD.